The primary structure comprises 324 residues: CYFIP-related Rac1 interactor B (324 aa).

Residue Gly-2 is the site of N-myristoyl glycine attachment. A Glycyl lysine isopeptide (Lys-Gly) (interchain with G-Cter in ubiquitin) cross-link involves residue Lys-74.

Belongs to the CYRI family. As to quaternary structure, interacts with RAC1 (GTP-bound form preferentially). Post-translationally, ubiquitinated at Lys-74 upon Salmonella bacterial infection.

The protein resides in the membrane. The protein localises to the mitochondrion. Functionally, negatively regulates RAC1 signaling and RAC1-driven cytoskeletal remodeling. Regulates chemotaxis, cell migration and epithelial polarization by controlling the polarity, plasticity, duration and extent of protrusions. Limits Rac1 mediated activation of the Scar/WAVE complex, focuses protrusion signals and regulates pseudopod complexity by inhibiting Scar/WAVE-induced actin polymerization. Protects against Salmonella bacterial infection. Attenuates processes such as macropinocytosis, phagocytosis and cell migration and restrict sopE-mediated bacterial entry. Also restricts infection mediated by Mycobacterium tuberculosis and Listeria monocytogenes. Involved in the regulation of mitochondrial dynamics and oxidative stress. The polypeptide is CYFIP-related Rac1 interactor B (Homo sapiens (Human)).